Consider the following 150-residue polypeptide: Putative solute carrier family 19 member 4 (150 aa).

The tract at residues 118-137 is disordered; that stretch reads PSVREGACNEKSTENKKPQD. The span at 124–136 shows a compositional bias: basic and acidic residues; it reads ACNEKSTENKKPQ.

This sequence belongs to the reduced folate carrier (RFC) transporter (TC 2.A.48) family.

In Homo sapiens (Human), this protein is Putative solute carrier family 19 member 4.